Reading from the N-terminus, the 809-residue chain is Bifunctional enzyme MurC/Ddl (809 aa).

The interval 1–450 (MKGTPQYHFI…GEALKDFNPK (450 aa)) is UDP-N-acetylmuramate--alanine ligase. ATP-binding positions include 111–117 (GSHGKTG) and 606–661 (IETF…SREI). Residues 451-809 (KLSIGLVCGG…FTKEQDLVKR (359 aa)) form a D-alanine--D-alanine ligase region. The ATP-grasp domain maps to 573-784 (KRIASAVGVP…QEQIVDHFII (212 aa)). Residues Asp-738, Glu-751, and Asn-753 each contribute to the Mg(2+) site.

In the N-terminal section; belongs to the MurCDEF family. The protein in the C-terminal section; belongs to the D-alanine--D-alanine ligase family. The cofactor is Mg(2+). Requires Mn(2+) as cofactor.

Its subcellular location is the cytoplasm. It catalyses the reaction UDP-N-acetyl-alpha-D-muramate + L-alanine + ATP = UDP-N-acetyl-alpha-D-muramoyl-L-alanine + ADP + phosphate + H(+). It carries out the reaction 2 D-alanine + ATP = D-alanyl-D-alanine + ADP + phosphate + H(+). It participates in cell wall biogenesis; peptidoglycan biosynthesis. Cell wall formation. This Chlamydia pneumoniae (Chlamydophila pneumoniae) protein is Bifunctional enzyme MurC/Ddl (murC/ddl).